The primary structure comprises 688 residues: Thyroid hormone-induced protein B (688 aa).

A signal peptide spans 1-20 (MMLSHWVLLLSLGAVWLAEG). MAM domains lie at 26-169 (GSCT…GYCI), 170-330 (ECDF…SCSG), 341-500 (AGCD…SCKI), and 509-669 (GKCT…PCND). 2 N-linked (GlcNAc...) asparagine glycosylation sites follow: Asn-32 and Asn-135. N-linked (GlcNAc...) asparagine glycans are attached at residues Asn-358 and Asn-668.

It localises to the membrane. Its subcellular location is the secreted. The protein resides in the extracellular space. The protein is Thyroid hormone-induced protein B of Xenopus laevis (African clawed frog).